The chain runs to 1489 residues: DEAD-box ATP-dependent DNA helicase Fancm (1489 aa).

A Helicase ATP-binding domain is found at 65 to 237 (IVQSALFKNT…AVCRNLYISN (173 aa)). 78-85 (LPTGLGKT) contacts ATP. A DEAH box motif is present at residues 185–188 (DEAH). The Helicase C-terminal domain occupies 418–584 (KLRQVLVQHF…VVKLSLYEQN (167 aa)). 6 disordered regions span residues 591–647 (KFQP…ESQQ), 980–1000 (VEES…ESNH), 1145–1182 (TETI…PQGK), 1196–1222 (VLPC…SIQE), 1255–1293 (NPTI…PQIA), and 1452–1489 (ERRK…VLID). The segment covering 594–610 (PKCEEKHMEPVAEEKPK) has biased composition (basic and acidic residues). Residues 611–625 (PKSAAKTKESRKRKQ) are compositionally biased toward basic residues. Polar residues predominate over residues 985 to 998 (RSTPISIADSSGES). Residues 1149–1161 (KNSENKNSHEDGS) are compositionally biased toward basic and acidic residues. The span at 1480 to 1489 (SDEDDVVLID) shows a compositional bias: acidic residues.

This sequence belongs to the DEAD box helicase family. DEAH subfamily. FANCM sub-subfamily.

It is found in the nucleus. It catalyses the reaction ATP + H2O = ADP + phosphate + H(+). The catalysed reaction is Couples ATP hydrolysis with the unwinding of duplex DNA by translocating in the 3'-5' direction.. A ssDNA-dependent ATPase with 3' to 5' helicase activity. Involved in multiple DNA-damage responses, some that require ATPase and helicase activity and some that are independent of these. Involved in DNA interstrand cross-link repair, probably together with Fancl and other Fanconi anemia pathway homologs. Independent of Fancl involved in DNA double strand break repair, including contributing to the synthesis-dependent strand annealing (SDSA) pathway. Probably contributes to SDSA by unwinding short duplex regions in complex D-loop-like DNA structures. The chain is DEAD-box ATP-dependent DNA helicase Fancm from Drosophila melanogaster (Fruit fly).